The chain runs to 236 residues: uncharacterized protein (236 aa).

Positions 1-17 (MSVSSLLQPNTYNINSK) are enriched in polar residues. Positions 1–94 (MSVSSLLQPN…GVKGTTGGTI (94 aa)) are disordered. Residues 18–35 (SQSLSNTPSNPTSQTNTL) are compositionally biased toward low complexity. Residues 58 to 91 (GPSGPKGDKGDPGSKGETGSQGIKGDPGVKGTTG) form the Collagen-like domain.

It belongs to the sputnik virus V6 family.

This is an uncharacterized protein from Sputnik virophage.